The following is a 457-amino-acid chain: Siroheme synthase (457 aa).

Residues 1 to 204 (MDHLPIFCQL…ADAKAVSEIT (204 aa)) form a precorrin-2 dehydrogenase /sirohydrochlorin ferrochelatase region. NAD(+) contacts are provided by residues 22-23 (DV) and 43-44 (LA). Ser128 carries the post-translational modification Phosphoserine. The tract at residues 216–457 (GEVVLVGAGP…RDKLNWFSNH (242 aa)) is uroporphyrinogen-III C-methyltransferase. An S-adenosyl-L-methionine-binding site is contributed by Pro225. Asp248 functions as the Proton acceptor in the catalytic mechanism. Lys270 acts as the Proton donor in catalysis. S-adenosyl-L-methionine contacts are provided by residues 301-303 (GGD), Ile306, 331-332 (TA), Met382, and Gly411.

This sequence in the N-terminal section; belongs to the precorrin-2 dehydrogenase / sirohydrochlorin ferrochelatase family. The protein in the C-terminal section; belongs to the precorrin methyltransferase family.

The catalysed reaction is uroporphyrinogen III + 2 S-adenosyl-L-methionine = precorrin-2 + 2 S-adenosyl-L-homocysteine + H(+). It carries out the reaction precorrin-2 + NAD(+) = sirohydrochlorin + NADH + 2 H(+). The enzyme catalyses siroheme + 2 H(+) = sirohydrochlorin + Fe(2+). It functions in the pathway cofactor biosynthesis; adenosylcobalamin biosynthesis; precorrin-2 from uroporphyrinogen III: step 1/1. The protein operates within cofactor biosynthesis; adenosylcobalamin biosynthesis; sirohydrochlorin from precorrin-2: step 1/1. It participates in porphyrin-containing compound metabolism; siroheme biosynthesis; precorrin-2 from uroporphyrinogen III: step 1/1. Its pathway is porphyrin-containing compound metabolism; siroheme biosynthesis; siroheme from sirohydrochlorin: step 1/1. It functions in the pathway porphyrin-containing compound metabolism; siroheme biosynthesis; sirohydrochlorin from precorrin-2: step 1/1. Functionally, multifunctional enzyme that catalyzes the SAM-dependent methylations of uroporphyrinogen III at position C-2 and C-7 to form precorrin-2 via precorrin-1. Then it catalyzes the NAD-dependent ring dehydrogenation of precorrin-2 to yield sirohydrochlorin. Finally, it catalyzes the ferrochelation of sirohydrochlorin to yield siroheme. In Citrobacter koseri (strain ATCC BAA-895 / CDC 4225-83 / SGSC4696), this protein is Siroheme synthase.